The following is a 1170-amino-acid chain: Type I restriction enzyme EcoKI endonuclease subunit (1170 aa).

Residues 143–229 (YHQEVLTLKQ…QERKAYHKEI (87 aa)) are a coiled coil. Residues 431-450 (NQWFADNPGMSELGLRYYQE) constitute a DNA-binding region (H-T-H motif). The region spanning 458-639 (KAIVKGQQEI…GEPVYRYTYR (182 aa)) is the Helicase ATP-binding domain. 472–478 (ATGTGKT) provides a ligand contact to ATP. The DEAH box signature appears at 574–577 (DEAH). The Helicase C-terminal domain occupies 714 to 879 (ELTNYLDPTG…TLVNEITDSE (166 aa)).

It belongs to the HsdR family. As to quaternary structure, the type I restriction/modification system is composed of three polypeptides R, M and S. The restriction enzyme has stoichiometry R(2)M(2)S(1). The methyltransferase is composed of M(2)S(1). (Microbial infection) Interacts with Escherichia phage T7 protein Ocr; this interaction leads to the inhibition of the type I bifunctional endonuclease and methyltransferase restriction enzyme R.EcoKI composed of R(2)M(2)S(1). Upon purification after overexpression about one-third has the initiating methionine removed.

The catalysed reaction is Endonucleolytic cleavage of DNA to give random double-stranded fragments with terminal 5'-phosphates, ATP is simultaneously hydrolyzed.. Functionally, the subtype A restriction (R) subunit of a type I restriction enzyme that recognizes 5'-AACN(6)GTGC-3' and cleaves a random distance away. The R subunit is required for both endonuclease and ATPase activities but not for modification. Has endonucleolytic activity that requires Mg(2+), ATP and S-adenosyl-L-methionine (SAM); ATP can be replaced by dATP, no tested molecule could substitute for SAM. Generates double-stranded DNA with no nicks, by cutting one strand then the other within a few seconds. Cleaves only non-methylated DNA, hemi-methylated and fully methylated DNA are not substrates. After locating a non-methylated recognition site, the enzyme complex serves as a molecular motor that translocates DNA in an ATP-dependent manner until a collision occurs that triggers cleavage. The protein is Type I restriction enzyme EcoKI endonuclease subunit of Escherichia coli (strain K12).